The chain runs to 322 residues: MRLSEFTTLFLLFSVLLLSASAEQCGSQAGGALCASGLCCSKFGWCGNTNEYCGPGNCQSQCPGGPGPSGDLGGVISNSMFDQMLNHRNDNACQGKNNFYSYNAFVTAAGSFPGFGTTGDITARKREIAAFLAQTSHETTGGWPTAPDGPYAWGYCFLREQGSPGDYCTPSSQWPCAPGRKYFGRGPIQISHNYNYGPCGRAIGVDLLNNPDLVATDPVISFKSAIWFWMTPQSPKPSCHDVITGRWQPSGADQAANRVPGFGVITNIINGGLECGHGSDSRVQDRIGFYRRYCGILGVSPGENLDCGNQRSFGNGLLVDIM.

The N-terminal stretch at 1 to 22 is a signal peptide; the sequence is MRLSEFTTLFLLFSVLLLSASA. The region spanning 23–64 is the Chitin-binding type-1 domain; it reads EQCGSQAGGALCASGLCCSKFGWCGNTNEYCGPGNCQSQCPG. Cystine bridges form between cysteine 25–cysteine 40, cysteine 34–cysteine 46, cysteine 39–cysteine 53, and cysteine 58–cysteine 62. 2 positions are modified to 4-hydroxyproline: proline 66 and proline 68. 3 disulfide bridges follow: cysteine 93–cysteine 156, cysteine 168–cysteine 176, and cysteine 275–cysteine 307. Glutamate 138 (proton donor) is an active-site residue. The propeptide at 316 to 322 is removed in mature form; it reads GLLVDIM.

It belongs to the glycosyl hydrolase 19 family. Chitinase class I subfamily. The 4-hydroxyproline residues are not glycosylated in this plant vacuolar protein.

The protein resides in the vacuole. It is found in the secreted. Its subcellular location is the cell wall. It carries out the reaction Random endo-hydrolysis of N-acetyl-beta-D-glucosaminide (1-&gt;4)-beta-linkages in chitin and chitodextrins.. In terms of biological role, defense against chitin-containing fungal pathogens. The chain is Basic 30 kDa endochitinase (CHI9) from Solanum lycopersicum (Tomato).